The chain runs to 151 residues: Large ribosomal subunit protein uL15 (151 aa).

The segment at 37–57 is disordered; it reads GMRGQKSRSGRPTRPGFEGGQ.

It belongs to the universal ribosomal protein uL15 family. Part of the 50S ribosomal subunit.

Its function is as follows. Binds to the 23S rRNA. The protein is Large ribosomal subunit protein uL15 of Prochlorococcus marinus (strain MIT 9313).